A 318-amino-acid polypeptide reads, in one-letter code: Acetyl-coenzyme A carboxylase carboxyl transferase subunit alpha (318 aa).

The CoA carboxyltransferase C-terminal domain maps to 34 to 295; that stretch reads DIEDQISQLR…KQAIKKDLSE (262 aa).

This sequence belongs to the AccA family. Acetyl-CoA carboxylase is a heterohexamer composed of biotin carboxyl carrier protein (AccB), biotin carboxylase (AccC) and two subunits each of ACCase subunit alpha (AccA) and ACCase subunit beta (AccD).

It localises to the cytoplasm. It carries out the reaction N(6)-carboxybiotinyl-L-lysyl-[protein] + acetyl-CoA = N(6)-biotinyl-L-lysyl-[protein] + malonyl-CoA. It functions in the pathway lipid metabolism; malonyl-CoA biosynthesis; malonyl-CoA from acetyl-CoA: step 1/1. Component of the acetyl coenzyme A carboxylase (ACC) complex. First, biotin carboxylase catalyzes the carboxylation of biotin on its carrier protein (BCCP) and then the CO(2) group is transferred by the carboxyltransferase to acetyl-CoA to form malonyl-CoA. The chain is Acetyl-coenzyme A carboxylase carboxyl transferase subunit alpha from Colwellia psychrerythraea (strain 34H / ATCC BAA-681) (Vibrio psychroerythus).